A 1153-amino-acid chain; its full sequence is Error-prone DNA polymerase (1153 aa).

A disordered region spans residues 1107–1153; the sequence is DELIAPSASTEREAPLNDDRRDHPDLPAQQIRHPRNVRILPPSRDFH. Residues 1116-1131 show a composition bias toward basic and acidic residues; the sequence is TEREAPLNDDRRDHPD.

It belongs to the DNA polymerase type-C family. DnaE2 subfamily.

The protein localises to the cytoplasm. The catalysed reaction is DNA(n) + a 2'-deoxyribonucleoside 5'-triphosphate = DNA(n+1) + diphosphate. DNA polymerase involved in damage-induced mutagenesis and translesion synthesis (TLS). It is not the major replicative DNA polymerase. In Rhodopseudomonas palustris (strain BisA53), this protein is Error-prone DNA polymerase.